We begin with the raw amino-acid sequence, 305 residues long: Tyrosine recombinase XerD (305 aa).

In terms of domain architecture, Core-binding (CB) spans 9–94 (MQDFGYVEQF…AIRRLFQYLH (86 aa)). In terms of domain architecture, Tyr recombinase spans 115–299 (RLPKDISEEQ…ATERLKQIHS (185 aa)). Residues Arg155, Lys179, His251, Arg254, and His277 contribute to the active site. The active-site O-(3'-phospho-DNA)-tyrosine intermediate is the Tyr286.

This sequence belongs to the 'phage' integrase family. XerD subfamily. As to quaternary structure, forms a cyclic heterotetrameric complex composed of two molecules of XerC and two molecules of XerD.

Its subcellular location is the cytoplasm. Its function is as follows. Site-specific tyrosine recombinase, which acts by catalyzing the cutting and rejoining of the recombining DNA molecules. The XerC-XerD complex is essential to convert dimers of the bacterial chromosome into monomers to permit their segregation at cell division. It also contributes to the segregational stability of plasmids. The polypeptide is Tyrosine recombinase XerD (Vibrio vulnificus (strain CMCP6)).